Here is a 417-residue protein sequence, read N- to C-terminus: NADH-quinone oxidoreductase subunit D (417 aa).

The protein belongs to the complex I 49 kDa subunit family. In terms of assembly, NDH-1 is composed of 14 different subunits. Subunits NuoB, C, D, E, F, and G constitute the peripheral sector of the complex.

It is found in the cell inner membrane. The catalysed reaction is a quinone + NADH + 5 H(+)(in) = a quinol + NAD(+) + 4 H(+)(out). Functionally, NDH-1 shuttles electrons from NADH, via FMN and iron-sulfur (Fe-S) centers, to quinones in the respiratory chain. The immediate electron acceptor for the enzyme in this species is believed to be ubiquinone. Couples the redox reaction to proton translocation (for every two electrons transferred, four hydrogen ions are translocated across the cytoplasmic membrane), and thus conserves the redox energy in a proton gradient. The protein is NADH-quinone oxidoreductase subunit D of Polynucleobacter necessarius subsp. necessarius (strain STIR1).